The chain runs to 943 residues: UvrABC system protein A (943 aa).

32–39 (GLSGSGKS) is a binding site for ATP. The segment at 251 to 278 (CPVCGFTVPELEPRLFSFNAPFGSCPTC) adopts a C4-type zinc-finger fold. ABC transporter domains follow at residues 308-589 (WNPI…KKSI) and 609-937 (GSGR…QYLK). An ATP-binding site is contributed by 641–648 (GVSGSGKS). The segment at 740–766 (CEACSGDGIIKIEMHFLPDVYVPCEVC) adopts a C4-type zinc-finger fold.

This sequence belongs to the ABC transporter superfamily. UvrA family. Forms a heterotetramer with UvrB during the search for lesions.

Its subcellular location is the cytoplasm. Functionally, the UvrABC repair system catalyzes the recognition and processing of DNA lesions. UvrA is an ATPase and a DNA-binding protein. A damage recognition complex composed of 2 UvrA and 2 UvrB subunits scans DNA for abnormalities. When the presence of a lesion has been verified by UvrB, the UvrA molecules dissociate. The sequence is that of UvrABC system protein A from Streptococcus mutans serotype c (strain ATCC 700610 / UA159).